The primary structure comprises 970 residues: mRNA-decapping enzyme subunit 2 (970 aa).

The region spanning 101–228 (KSIPVRGAAI…IKYYLINSMM (128 aa)) is the Nudix hydrolase domain. S116 is modified (phosphoserine). Residues 134-155 (GKISKDENDIDCCIREVKEEIG) carry the Nudix box motif. Residues E149 and E153 each coordinate Mn(2+). 3 disordered regions span residues 287-341 (NNAV…ANNK), 417-465 (AVSQ…PKLK), and 499-692 (PTSS…LSST). Residues 300-314 (EHQHLKEQSGEHNQQ) show a composition bias toward basic and acidic residues. The span at 315–334 (KDQQSSFSSQQQPSIFPSLS) shows a compositional bias: low complexity. Residue S439 is modified to Phosphoserine. The span at 499–522 (PTSSQKTHASKPDTSFLPNDSVSG) shows a compositional bias: polar residues. Positions 526–539 (AEYEDFESSSDEEV) are enriched in acidic residues. Residues 560-576 (SEKDSRRSQKEKPRSDA) are compositionally biased toward basic and acidic residues. Positions 577–590 (NKTNLNASAESNSV) are enriched in polar residues. Over residues 596–608 (KSSPSTQSKQNSS) the composition is skewed to low complexity. A compositionally biased stretch (acidic residues) spans 625–637 (DAYEVFESSSDEE). The residue at position 677 (T677) is a Phosphothreonine. The segment covering 677–691 (TESNKSINETVGLSS) has biased composition (polar residues). A phosphoserine mark is found at S679, S682, S751, S771, S773, and S778. The interval 831 to 862 (LKKNNSTGYPRTEGGPSSEMPTSMKRNDATNN) is disordered.

Belongs to the Nudix hydrolase family. DCP2 subfamily. In terms of assembly, component of the decapping complex composed of DCP1 and DCP2. Interacts with mRNA, LSM2, LSM4 and LSM8. It depends on Mn(2+) as a cofactor.

Its subcellular location is the cytoplasm. It localises to the P-body. Its function is as follows. Catalytic component of the decapping complex necessary for the degradation of mRNAs, both in normal mRNA turnover and in nonsense-mediated mRNA decay. Removes the 7-methyl guanine cap structure from mRNA molecules, yielding a 5'-phosphorylated mRNA fragment and 7m-GDP. Decapping is the major pathway of mRNA degradation in yeast. It occurs through deadenylation, decapping and subsequent 5' to 3' exonucleolytic decay of the transcript body. The sequence is that of mRNA-decapping enzyme subunit 2 (DCP2) from Saccharomyces cerevisiae (strain YJM789) (Baker's yeast).